A 111-amino-acid polypeptide reads, in one-letter code: Probable 4-amino-4-deoxy-L-arabinose-phosphoundecaprenol flippase subunit ArnE (111 aa).

The next 3 membrane-spanning stretches (helical) occupy residues 36–56 (IVLW…LWLL), 61–81 (VPVG…TLAA), and 88–108 (PVSP…VILG). In terms of domain architecture, EamA spans 40–109 (LGLALACLGL…IIGGIVILGS (70 aa)).

The protein belongs to the ArnE family. As to quaternary structure, heterodimer of ArnE and ArnF.

It is found in the cell inner membrane. The protein operates within bacterial outer membrane biogenesis; lipopolysaccharide biosynthesis. Its function is as follows. Translocates 4-amino-4-deoxy-L-arabinose-phosphoundecaprenol (alpha-L-Ara4N-phosphoundecaprenol) from the cytoplasmic to the periplasmic side of the inner membrane. The polypeptide is Probable 4-amino-4-deoxy-L-arabinose-phosphoundecaprenol flippase subunit ArnE (Shigella flexneri).